Here is a 1102-residue protein sequence, read N- to C-terminus: Carbamoyl phosphate synthase large chain (1102 aa).

The interval 1-408 (MPKRTDIQSV…ALQKALRSLE (408 aa)) is carboxyphosphate synthetic domain. ATP contacts are provided by arginine 129, arginine 175, glycine 181, glycine 182, glutamate 214, isoleucine 216, glutamate 221, glycine 247, valine 248, histidine 249, glutamine 291, and glutamate 305. Residues 138-334 (AVRAKIGHGE…IAKIAAKLAV (197 aa)) enclose the ATP-grasp 1 domain. Mg(2+) contacts are provided by glutamine 291, glutamate 305, and asparagine 307. The Mn(2+) site is built by glutamine 291, glutamate 305, and asparagine 307. Residues 409-551 (KKGSQFTFVG…YFYSSYDEES (143 aa)) are oligomerization domain. Residues 552 to 954 (EVAPREKPAV…AYAKSQAGAY (403 aa)) form a carbamoyl phosphate synthetic domain region. An ATP-grasp 2 domain is found at 682–873 (GQVLAEAGLP…LAKAAARISL (192 aa)). 10 residues coordinate ATP: arginine 718, arginine 757, leucine 759, glutamate 764, glycine 789, isoleucine 790, histidine 791, serine 792, glutamine 832, and glutamate 844. Glutamine 832, glutamate 844, and asparagine 846 together coordinate Mg(2+). Mn(2+)-binding residues include glutamine 832, glutamate 844, and asparagine 846. The MGS-like domain occupies 955-1100 (GPLPTKGRAF…QEHAEHLTAA (146 aa)). The interval 955–1102 (GPLPTKGRAF…HAEHLTAARD (148 aa)) is allosteric domain.

It belongs to the CarB family. Composed of two chains; the small (or glutamine) chain promotes the hydrolysis of glutamine to ammonia, which is used by the large (or ammonia) chain to synthesize carbamoyl phosphate. Tetramer of heterodimers (alpha,beta)4. The cofactor is Mg(2+). It depends on Mn(2+) as a cofactor.

The enzyme catalyses hydrogencarbonate + L-glutamine + 2 ATP + H2O = carbamoyl phosphate + L-glutamate + 2 ADP + phosphate + 2 H(+). The catalysed reaction is hydrogencarbonate + NH4(+) + 2 ATP = carbamoyl phosphate + 2 ADP + phosphate + 2 H(+). Its pathway is amino-acid biosynthesis; L-arginine biosynthesis; carbamoyl phosphate from bicarbonate: step 1/1. It participates in pyrimidine metabolism; UMP biosynthesis via de novo pathway; (S)-dihydroorotate from bicarbonate: step 1/3. Functionally, large subunit of the glutamine-dependent carbamoyl phosphate synthetase (CPSase). CPSase catalyzes the formation of carbamoyl phosphate from the ammonia moiety of glutamine, carbonate, and phosphate donated by ATP, constituting the first step of 2 biosynthetic pathways, one leading to arginine and/or urea and the other to pyrimidine nucleotides. The large subunit (synthetase) binds the substrates ammonia (free or transferred from glutamine from the small subunit), hydrogencarbonate and ATP and carries out an ATP-coupled ligase reaction, activating hydrogencarbonate by forming carboxy phosphate which reacts with ammonia to form carbamoyl phosphate. This is Carbamoyl phosphate synthase large chain from Streptomyces avermitilis (strain ATCC 31267 / DSM 46492 / JCM 5070 / NBRC 14893 / NCIMB 12804 / NRRL 8165 / MA-4680).